The sequence spans 297 residues: Iron/alpha-ketoglutarate-dependent dioxygenase ausU (297 aa).

Residues histidine 130, aspartate 132, and histidine 206 each contribute to the Fe cation site.

This sequence belongs to the PhyH family. In terms of assembly, homodimer. Fe cation serves as cofactor.

It participates in secondary metabolite biosynthesis; terpenoid biosynthesis. Its function is as follows. Iron/alpha-ketoglutarate-dependent dioxygenase; part of the gene cluster that mediates the biosynthesis of calidodehydroaustin, a fungal meroterpenoid. The first step of the pathway is the synthesis of 3,5-dimethylorsellinic acid by the polyketide synthase ausA. 3,5-dimethylorsellinic acid is then prenylated by the polyprenyl transferase ausN. Further epoxidation by the FAD-dependent monooxygenase ausM and cyclization by the probable terpene cyclase ausL lead to the formation of protoaustinoid A. Protoaustinoid A is then oxidized to spiro-lactone preaustinoid A3 by the combined action of the FAD-binding monooxygenases ausB and ausC, and the dioxygenase ausE. Acid-catalyzed keto-rearrangement and ring contraction of the tetraketide portion of preaustinoid A3 by ausJ lead to the formation of preaustinoid A4. The aldo-keto reductase ausK, with the help of ausH, is involved in the next step by transforming preaustinoid A4 into isoaustinone which is in turn hydroxylated by the P450 monooxygenase ausI to form austinolide. The cytochrome P450 monooxygenase ausG modifies austinolide to austinol. Austinol is further acetylated to austin by the O-acetyltransferase ausP, which spontaneously changes to dehydroaustin. The cytochrome P450 monooxygenase ausR then converts dehydroaustin is into 7-dehydrodehydroaustin. The hydroxylation catalyzed by ausR permits the O-acetyltransferase ausQ to add an additional acetyl group to the molecule, leading to the formation of acetoxydehydroaustin. The short chain dehydrogenase ausT catalyzes the reduction of the double bond present between carbon atoms 1 and 2 to convert 7-dehydrodehydroaustin into 1,2-dihydro-7-hydroxydehydroaustin. AusQ catalyzes not only an acetylation reaction but also the addition of the PKS ausV diketide product to 1,2-dihydro-7-hydroxydehydroaustin, forming precalidodehydroaustin. Finally, the iron/alpha-ketoglutarate-dependent dioxygenase converts precalidodehydroaustin into calidodehydroaustin. The chain is Iron/alpha-ketoglutarate-dependent dioxygenase ausU from Aspergillus calidoustus.